The chain runs to 313 residues: Formimidoylglutamase (313 aa).

Residues His130, Asp155, His157, Asp159, Asp241, and Asp243 each contribute to the Mn(2+) site.

It belongs to the arginase family. Mn(2+) serves as cofactor.

It catalyses the reaction N-formimidoyl-L-glutamate + H2O = formamide + L-glutamate. The protein operates within amino-acid degradation; L-histidine degradation into L-glutamate; L-glutamate from N-formimidoyl-L-glutamate (hydrolase route): step 1/1. Functionally, catalyzes the conversion of N-formimidoyl-L-glutamate to L-glutamate and formamide. In Salmonella heidelberg (strain SL476), this protein is Formimidoylglutamase.